The chain runs to 540 residues: 2,3-bisphosphoglycerate-independent phosphoglycerate mutase (540 aa).

Residues Asp-24 and Ser-74 each coordinate Mn(2+). Ser-74 serves as the catalytic Phosphoserine intermediate. Residues His-135, 165 to 166 (RD), Arg-197, Arg-203, 268 to 271 (RPDR), and Lys-341 each bind substrate. Residues Asp-408, His-412, Asp-449, His-450, and His-467 each contribute to the Mn(2+) site.

This sequence belongs to the BPG-independent phosphoglycerate mutase family. In terms of assembly, monomer. It depends on Mn(2+) as a cofactor.

The enzyme catalyses (2R)-2-phosphoglycerate = (2R)-3-phosphoglycerate. It functions in the pathway carbohydrate degradation; glycolysis; pyruvate from D-glyceraldehyde 3-phosphate: step 3/5. Its function is as follows. Catalyzes the interconversion of 2-phosphoglycerate and 3-phosphoglycerate. This is 2,3-bisphosphoglycerate-independent phosphoglycerate mutase from Prochlorococcus marinus (strain MIT 9313).